The primary structure comprises 236 residues: Transcriptional regulatory protein RprY (236 aa).

The 115-residue stretch at 9-123 folds into the Response regulatory domain; sequence RILLCEDDEN…ELTFRIEAIL (115 aa). Asp-58 is modified (4-aspartylphosphate). Residues 134 to 231 constitute a DNA-binding region (ompR/PhoB-type); sequence SNVYKIGKFT…IHGKGYKLIT (98 aa).

In terms of processing, phosphorylated by RprX.

The protein resides in the cytoplasm. Its function is as follows. Member of the two-component regulatory system RprX/RprY. The protein is Transcriptional regulatory protein RprY (rprY) of Bacteroides fragilis (strain YCH46).